The following is a 100-amino-acid chain: Cell division protein FtsB (100 aa).

Topologically, residues 1–3 (MKQ) are cytoplasmic. A helical transmembrane segment spans residues 4–21 (LIFLLICLLSLLQYRLWL). Over 22 to 100 (GDNNLSEYVL…ELRERNPFNR (79 aa)) the chain is Periplasmic. Residues 49–73 (RNQILKEEIIDLKRGTEAIEERARN) are a coiled coil.

This sequence belongs to the FtsB family. As to quaternary structure, part of a complex composed of FtsB, FtsL and FtsQ.

It localises to the cell inner membrane. In terms of biological role, essential cell division protein. May link together the upstream cell division proteins, which are predominantly cytoplasmic, with the downstream cell division proteins, which are predominantly periplasmic. In Shewanella frigidimarina (strain NCIMB 400), this protein is Cell division protein FtsB.